Consider the following 2892-residue polypeptide: E3 ubiquitin-protein ligase lubel (2892 aa).

Disordered regions lie at residues 23–55, 125–252, 395–423, 483–631, 644–672, 685–737, 757–865, and 949–975; these read DRIG…KSTP, KQHM…QLEK, SQQH…QFGS, PSAA…ESEG, QKLQ…ENTQ, AHEE…PDHE, CCKT…DNSL, and DRFT…QQES. Positions 40–52 are enriched in low complexity; that stretch reads GLPKAPALPPKAK. Residues 189–198 are compositionally biased toward gly residues; sequence GWRGSLGGGA. The segment covering 206–215 has biased composition (polar residues); sequence ATSSANQMNN. Low complexity-rich tracts occupy residues 402–412 and 483–503; these read AQHPHQALPQH and PSAA…TPSR. Over residues 516–528 the composition is skewed to acidic residues; that stretch reads VDDELTDDEDSDQ. A compositionally biased stretch (polar residues) spans 535 to 546; it reads VSNRSGMTSASR. Residues 547–560 show a composition bias toward basic residues; that stretch reads SQHHQNHIQPRQRR. The span at 606–623 shows a compositional bias: polar residues; the sequence is GTLTRNKTATDSARTSRI. Over residues 647 to 670 the composition is skewed to basic and acidic residues; the sequence is QEADQHKSSKKAEPKRKPEMKDEN. Positions 801 to 813 are enriched in polar residues; sequence KPTTKSQQPSQKS. Low complexity-rich tracts occupy residues 818-837 and 846-856; these read SKTT…AVNS and KTPSKSTLKTS. Residues 1042-1187 enclose the UBA-like 1 domain; that stretch reads MHIILKELEL…LMRIWGSPNG (146 aa). Disordered regions lie at residues 1214–1252, 1477–1520, 1557–1653, 1717–2019, 2032–2082, 2191–2316, and 2411–2431; these read LQPP…SPYQ, LPTA…KLET, AEVQ…KILS, STTI…NLSE, RDEI…EGNT, SAPP…PLRS, and DYET…EPQK. Polar residues predominate over residues 1241–1252; it reads VKSTYATPSPYQ. The span at 1510 to 1519 shows a compositional bias: basic and acidic residues; that stretch reads EELRQQEKLE. Residues 1560–1571 show a composition bias toward polar residues; that stretch reads QVQSDDQPSTSR. Residues 1576–1587 are compositionally biased toward basic residues; it reads RAKRSQQSRKGR. The span at 1595–1607 shows a compositional bias: polar residues; sequence PTNRTKLPNNIDQ. A compositionally biased stretch (basic and acidic residues) spans 1608–1627; that stretch reads KVNESKTAAKETEAVKDKDL. Composition is skewed to polar residues over residues 1630–1653, 1717–1726, and 1764–1779; these read AASN…KILS, STTISEQSEG, and KSPT…TSHI. Low complexity predominate over residues 1822–1834; the sequence is LSSSSLRSESRSS. Over residues 1859-1881 the composition is skewed to polar residues; the sequence is TVSSPKSEQLSDNQEVNLVSQET. Residues 1918 to 1927 are compositionally biased toward acidic residues; sequence DSDEVFEDAP. Residues 1953–1963 show a composition bias toward basic and acidic residues; the sequence is DGQRAETKSPE. 2 stretches are compositionally biased toward acidic residues: residues 1964 to 1975 and 2036 to 2079; these read DEVVILLDEESQ and SMDE…DGEE. Low complexity-rich tracts occupy residues 2214-2230 and 2269-2291; these read PSEV…ALPI and SGTA…TVSK. Positions 2297-2308 are enriched in polar residues; that stretch reads NEPTNKSNSTPL. Residues 2411–2425 show a composition bias toward acidic residues; that stretch reads DYETSATEEEQEEPN. The region spanning 2457–2513 is the UBA-like 2 domain; that stretch reads DPAILARKYVDQELVTNIAEAQIAATLVSMKFSEDVALWAARECSDLDQAIAMLQQE. The tract at residues 2510–2748 is TRIAD supradomain; it reads LQQECELCMN…LGLHAHHPRN (239 aa). Residues Cys-2514, Cys-2517, Cys-2537, Cys-2540, Cys-2618, Cys-2621, Cys-2636, Cys-2639, Cys-2644, Cys-2647, His-2655, Cys-2660, Cys-2690, and Cys-2693 each contribute to the Zn(2+) site. Residues 2514-2564 form an RING-type 1 zinc finger; it reads CELCMNSYPMNQMVSMLKCLHKCCKQCAKSYFTVQITDRSINDCSCPFCKL. A necessary for linear polyubiquitination and sufficent for inducing DptA in the intestine region spans residues 2514-2892; the sequence is CELCMNSYPM…IKKHIPLKSA (379 aa). Residues 2601–2660 form an IBR-type zinc finger; that stretch reads QRKLRDRSLLQDPNFKWCIQCSSGFFARPKQKRLICPDCGSVTCAQCRKPWERQHEGSSC. An RING-type 2; atypical zinc finger spans residues 2690–2720; it reads CPKCKFRYSLARGGCMHFTCTQCKFEFCYGC. Residue Cys-2704 is part of the active site. Zn(2+)-binding residues include Cys-2709 and Cys-2712.

The protein belongs to the RBR family.

It carries out the reaction [E2 ubiquitin-conjugating enzyme]-S-ubiquitinyl-L-cysteine + [acceptor protein]-L-lysine = [E2 ubiquitin-conjugating enzyme]-L-cysteine + [acceptor protein]-N(6)-ubiquitinyl-L-lysine.. Functionally, E3 ubiquitin-protein ligase which conjugates linear 'Met-1'- and 'Lys-63'-linked polyubiquitin chains to substrates and plays a crucial role in the NF-kappa-B intestinal inflammatory response to oral infection and in the heat stress response. Preferentially interacts with 'Lys-63'-linked, and to a lesser extent 'Lys-48'-linked, polyubiquitin chains. Upon oral infection with a Gram-negative bacterium E.carotovora subsp. carotovora 15, functions with the E2 ubiquitin-conjugating enzyme Ubc10 to mediate the conjugation of 'Lys-63'- and linear 'Met-1'-linked polyubiquitin chains to the substrate key which is essential for activation of the NF-kappa-B signaling cascade in the adult intestinal epithelium. It is not required for systemic immune response to septic infection with either E.carotovora subsp. carotovora 15 or Gram-positive M.luteus bacteria. Function in controlling linear ubiquitination is also essential for regulating the heat stress response in adults. This function may require the E2 ubiquitin-conjugating enzymes Ubc10 or eff. In Drosophila melanogaster (Fruit fly), this protein is E3 ubiquitin-protein ligase lubel.